Consider the following 431-residue polypeptide: Glutamate--tRNA ligase 1 (431 aa).

The 'HIGH' region motif lies at Pro-6–Asn-16. The short motif at Lys-235 to Arg-239 is the 'KMSKS' region element. Residue Lys-238 coordinates ATP.

The protein belongs to the class-I aminoacyl-tRNA synthetase family. Glutamate--tRNA ligase type 1 subfamily. As to quaternary structure, monomer.

It localises to the cytoplasm. The enzyme catalyses tRNA(Glu) + L-glutamate + ATP = L-glutamyl-tRNA(Glu) + AMP + diphosphate. Catalyzes the attachment of glutamate to tRNA(Glu) in a two-step reaction: glutamate is first activated by ATP to form Glu-AMP and then transferred to the acceptor end of tRNA(Glu). This Campylobacter concisus (strain 13826) protein is Glutamate--tRNA ligase 1.